Reading from the N-terminus, the 427-residue chain is Flotillin-1 (427 aa).

A phosphoserine mark is found at serine 19, serine 163, and serine 385. Threonine 387 is subject to Phosphothreonine.

This sequence belongs to the band 7/mec-2 family. Flotillin subfamily. In terms of assembly, heterooligomeric complex of flotillin-1 and flotillin-2 and caveolin-1 and caveolin-2. Interacts with ECPAS.

The protein resides in the cell membrane. The protein localises to the endosome. It localises to the membrane. It is found in the caveola. Its subcellular location is the melanosome. The protein resides in the membrane raft. May act as a scaffolding protein within caveolar membranes, functionally participating in formation of caveolae or caveolae-like vesicles. This Pongo abelii (Sumatran orangutan) protein is Flotillin-1 (FLOT1).